Here is a 622-residue protein sequence, read N- to C-terminus: Probable potassium transport system protein Kup 1 (622 aa).

The next 12 helical transmembrane spans lie at 11 to 31 (LTLG…LYAV), 50 to 70 (ILSI…VTLV), 101 to 121 (VLLL…VITP), 137 to 157 (PAFN…LFWV), 168 to 188 (FFGP…VAQI), 215 to 235 (FIIL…YADL), 247 to 267 (WFAV…ALLL), 285 to 305 (ALLP…QALI), 337 to 357 (IYLP…VMIF), 366 to 386 (AYGI…FFVI), 393 to 413 (PLWL…AFWA), and 419 to 439 (LFDG…LMIT).

Belongs to the HAK/KUP transporter (TC 2.A.72) family.

It localises to the cell inner membrane. It catalyses the reaction K(+)(in) + H(+)(in) = K(+)(out) + H(+)(out). In terms of biological role, transport of potassium into the cell. Likely operates as a K(+):H(+) symporter. The protein is Probable potassium transport system protein Kup 1 of Albidiferax ferrireducens (strain ATCC BAA-621 / DSM 15236 / T118) (Rhodoferax ferrireducens).